The following is an 86-amino-acid chain: Putative regulatory protein Dvul_2085 (86 aa).

Belongs to the RemA family.

The protein is Putative regulatory protein Dvul_2085 of Nitratidesulfovibrio vulgaris (strain DP4) (Desulfovibrio vulgaris).